The sequence spans 30 residues: Trypsin inhibitor 2 (30 aa).

3 disulfide bridges follow: Cys3–Cys20, Cys10–Cys22, and Cys16–Cys29.

The protein belongs to the protease inhibitor I7 (squash-type serine protease inhibitor) family.

It localises to the secreted. Its function is as follows. Inhibits trypsin. The protein is Trypsin inhibitor 2 of Luffa aegyptiaca (Sponge gourd).